The following is a 227-amino-acid chain: Isopentenyl-diphosphate Delta-isomerase 1 (227 aa).

A substrate-binding site is contributed by Lys36. Residues His40 and His51 each contribute to the Mg(2+) site. The Nudix hydrolase domain maps to 49-199 (LLHRAFSVFL…EIKITPWFQI (151 aa)). Arg70 and Lys74 together coordinate substrate. Cys86 is an active-site residue. Substrate is bound at residue Ser87. Mg(2+) is bound by residues Glu146 and Glu148. The active site involves Glu148. The residue at position 176 (Lys176) is an N6-acetyllysine. The short motif at 225-227 (HRM) is the Microbody targeting signal element.

The protein belongs to the IPP isomerase type 1 family. Monomer. Mg(2+) is required as a cofactor.

The protein resides in the peroxisome. The catalysed reaction is isopentenyl diphosphate = dimethylallyl diphosphate. The protein operates within isoprenoid biosynthesis; dimethylallyl diphosphate biosynthesis; dimethylallyl diphosphate from isopentenyl diphosphate: step 1/1. Its function is as follows. Catalyzes the 1,3-allylic rearrangement of the homoallylic substrate isopentenyl (IPP) to its highly electrophilic allylic isomer, dimethylallyl diphosphate (DMAPP). This Macaca fascicularis (Crab-eating macaque) protein is Isopentenyl-diphosphate Delta-isomerase 1 (IDI1).